The primary structure comprises 405 residues: MDFESSSAGPSTSYAEEPCTLSMLPQVSAVLSETSITESNVSCQLHPSRSAALNDNVRTLIYNRTDPHIQLDMRAFYNCMEYEEALQPNYHYFTGVQENITPFHREQAIDWIYDVAKEENCDGDVFLLAVSLIDRFMSVQNILKHDIQMIAGVALFIASKLKAPHPMTASKIAYYSDNSCPIDMILQWELLIVTTLQWETESPTAFSFFDFLASRIPQIHNMRGDFQTVVQKCQKMHKLATLFPSMQCAIGLYYVSNLPTQNKELAVKIKDLLANMFQLEVNLLDSYIPMVQRCMSTTPIYTSEDAEKTEPTPSAPASTQEPEAFQELKELKEEPLPTPPPEEPAFQKLVLLEPIPLSEQTPSTPLNDSGFSSDVSSPASSEKKRRRSTDWFEEDSTPPKIFKTL.

Residues 76–200 enclose the Cyclin N-terminal domain; the sequence is FYNCMEYEEA…LIVTTLQWET (125 aa). The tract at residues 301–405 is disordered; the sequence is YTSEDAEKTE…STPPKIFKTL (105 aa). The span at 311 to 321 shows a compositional bias: polar residues; it reads PTPSAPASTQE. The span at 326–335 shows a compositional bias: basic and acidic residues; that stretch reads QELKELKEEP. Positions 358-380 are enriched in polar residues; that stretch reads SEQTPSTPLNDSGFSSDVSSPAS.

The protein belongs to the cyclin family. Cyclin D subfamily. Interacts with cdk-4; the interaction is likely involved in regulating cdk-4 activity.

In terms of biological role, in association with cdk-4, regulates the progression through the G1 phase of the cell cycle during postembryonic development. Regulates proliferation of the coelomocyte lineage and intestinal cells during late embryogenesis. In complex with cdk-4, involved in sex determination during gonadogenesis by regulating the asymmetric division of the somatic gonadal precursor cell (SGP). This Caenorhabditis elegans protein is G1/S-specific cyclin-D.